Here is a 1097-residue protein sequence, read N- to C-terminus: DNA-directed RNA polymerase subunit beta (1097 aa).

Positions 1072 to 1097 (QDVNPRRSTPSRPTYESLGVADYDED) are disordered.

The protein belongs to the RNA polymerase beta chain family. As to quaternary structure, in cyanobacteria the RNAP catalytic core is composed of 2 alpha, 1 beta, 1 beta', 1 gamma and 1 omega subunit. When a sigma factor is associated with the core the holoenzyme is formed, which can initiate transcription.

The catalysed reaction is RNA(n) + a ribonucleoside 5'-triphosphate = RNA(n+1) + diphosphate. Its function is as follows. DNA-dependent RNA polymerase catalyzes the transcription of DNA into RNA using the four ribonucleoside triphosphates as substrates. The polypeptide is DNA-directed RNA polymerase subunit beta (Synechococcus sp. (strain WH7803)).